We begin with the raw amino-acid sequence, 1108 residues long: Unconventional myosin-Ie (1108 aa).

The 674-residue stretch at 19 to 692 (SGVDDMVLLS…SLFLLEEMRE (674 aa)) folds into the Myosin motor domain. 112 to 119 (GESGAGKT) serves as a coordination point for ATP. Positions 581–591 (PHYIRCIKPNE) are actin-binding. The 30-residue stretch at 695-724 (YDGYARVIQKSWRKFVARKKYVQMREEASD) folds into the IQ domain. The 193-residue stretch at 730 to 922 (KERRRNSINR…NKVLQVSIGP (193 aa)) folds into the TH1 domain. The tract at residues 919-966 (SIGPGLPKNSRPTRRNTTQNTGYSSGTQNANYPVRAAPPPPGYHQNGV) is disordered. Positions 933 to 949 (RNTTQNTGYSSGTQNAN) are enriched in polar residues. Phosphoserine is present on residues Ser-980 and Ser-1002. A disordered region spans residues 993–1053 (ARPPLPRQQS…KPQPKPKPQV (61 aa)). Residues 999 to 1013 (RQQSTSSDRVSQTPE) show a composition bias toward polar residues. Positions 1035-1052 (RPPPAGGRPKPQPKPKPQ) are enriched in pro residues. The 58-residue stretch at 1051-1108 (PQVPQCKALYAYDAQDTDELSFNANDIIDIIKEDPSGWWTGRLRGKQGLFPNNYVTKI) folds into the SH3 domain.

This sequence belongs to the TRAFAC class myosin-kinesin ATPase superfamily. Myosin family. In terms of assembly, interacts with CALM and F-actin. Interacts (via SH3 domain) with SYNJ1, DNM1 and DNM2. Interacts with ARL14EP. Interacts with CARMIL1. In terms of tissue distribution, expressed in the immune system. In the kidney, predominantly expressed in the glomerulus, including podocytes.

It localises to the cytoplasm. The protein localises to the cytoskeleton. Its subcellular location is the cytoplasmic vesicle. The protein resides in the clathrin-coated vesicle. It is found in the cell junction. Its function is as follows. Actin-based motor molecule with ATPase activity. Unconventional myosins serve in intracellular movements. Their highly divergent tails bind to membranous compartments, which are then moved relative to actin filaments. Binds to membranes containing anionic phospholipids via its tail domain. Involved in clathrin-mediated endocytosis and intracellular movement of clathrin-coated vesicles. Required for normal morphology of the glomerular basement membrane, normal development of foot processes by kidney podocytes and normal kidney function. In dendritic cells, may control the movement of class II-containing cytoplasmic vesicles along the actin cytoskeleton by connecting them with the actin network via ARL14EP and ARL14. This is Unconventional myosin-Ie (MYO1E) from Homo sapiens (Human).